We begin with the raw amino-acid sequence, 343 residues long: uncharacterized protein (343 aa).

Disordered stretches follow at residues 1-27 (MIRE…ERMT) and 205-247 (SGGL…SKRQ). A compositionally biased stretch (basic and acidic residues) spans 16 to 27 (RARDSRAQERMT). Acidic residues predominate over residues 219 to 228 (GQDDGNTDDG). Basic and acidic residues predominate over residues 229 to 247 (NDVHQKGRGEVESKTSKRQ).

Functionally, dispensable for normal development and fertility. This is an uncharacterized protein from Bos taurus (Bovine).